A 509-amino-acid chain; its full sequence is Solute carrier family 2, facilitated glucose transporter member 4 (509 aa).

Residues 1 to 24 (MPSGFQQIGSEDGEPPRQRVTGTL) are Cytoplasmic-facing. Positions 7 to 13 (QIGSEDG) are interaction with SRFBP1. Ser-10 carries the phosphoserine modification. The chain crosses the membrane as a helical span at residues 25–45 (VLAVFSAVLGSLQFGYNIGVI). Over 46-81 (NAPQKVIEQSYNETWLGRQGPEGPGSIPPGTLTTLW) the chain is Extracellular. A glycan (N-linked (GlcNAc...) asparagine) is linked at Asn-57. A helical membrane pass occupies residues 82-102 (ALSVAIFSVGGMISSFLIGII). Residues 103-111 (SQWLGRKRA) are Cytoplasmic-facing. A helical membrane pass occupies residues 112–132 (MLFNNALAVLGGTLMGLAKAA). The Extracellular segment spans residues 133–142 (ASYEMLILGR). A helical membrane pass occupies residues 143–163 (FFIGAYSGLTSGLVPMYVGEI). At 164 to 171 (APTHLRGA) the chain is on the cytoplasmic side. The chain crosses the membrane as a helical span at residues 172–192 (LGTLNQLAIVTGILIAQVLGL). Gln-177 contributes to the D-glucose binding site. Residues 193-200 (ESMLGTAT) lie on the Extracellular side of the membrane. Residues 201 to 221 (LWPLLLGITVLPALLQMVLLP) form a helical membrane-spanning segment. Over 222–287 (LCPESPRYLY…LLGSHTHRQP (66 aa)) the chain is Cytoplasmic. The S-palmitoyl cysteine moiety is linked to residue Cys-223. Position 274 is a phosphoserine; by SGK1 (Ser-274). Residues 288 to 308 (LVIAIVLQLSQQLSGINAVFY) traverse the membrane as a helical segment. D-glucose-binding positions include 298-299 (QQ) and Asn-304. The Extracellular portion of the chain corresponds to 309-323 (YSTSIFESAGVEKPA). The chain crosses the membrane as a helical span at residues 324–344 (YATIGAGVVNTVFTLVSVFLV). Asn-333 provides a ligand contact to D-glucose. Residues 345–353 (ERAGRRTLH) lie on the Cytoplasmic side of the membrane. The helical transmembrane segment at 354 to 374 (LLGLAGMCGCAILMTVALLLL) threads the bilayer. Residues 375–384 (ERVPAMSYVS) are Extracellular-facing. A helical transmembrane segment spans residues 385–405 (IVAIFGFVAFFEIGPGPIPWF). D-glucose contacts are provided by Glu-396 and Trp-404. The Cytoplasmic portion of the chain corresponds to 406-417 (IVAELFSQGPRP). The chain crosses the membrane as a helical span at residues 418–438 (AAMAVAGFSNWTCNFIIGMGF). Topologically, residues 439–445 (QYVADAM) are extracellular. The helical transmembrane segment at 446 to 466 (GPYVFLLFAVLLLGFFIFTFL) threads the bilayer. Residues 467-509 (KVPETRGRTFDQISAVFHRTPSLLEQEVKPSTELEYLGPDEHD) are Cytoplasmic-facing. At Thr-486 the chain carries Phosphothreonine. A Phosphoserine modification is found at Ser-488. The Dileucine internalization motif motif lies at 489-490 (LL).

It belongs to the major facilitator superfamily. Sugar transporter (TC 2.A.1.1) family. Glucose transporter subfamily. In terms of assembly, binds to DAXX. Interacts via its N-terminus with SRFBP1. Interacts with NDUFA9. Interacts with TRARG1; the interaction is required for proper SLC2A4 recycling after insulin stimulation. In terms of processing, sumoylated. Post-translationally, palmitoylated. Palmitoylation by ZDHHC7 controls the insulin-dependent translocation of GLUT4 to the plasma membrane.

It is found in the cell membrane. It localises to the endomembrane system. Its subcellular location is the cytoplasm. The protein resides in the perinuclear region. The catalysed reaction is D-glucose(out) = D-glucose(in). Its function is as follows. Insulin-regulated facilitative glucose transporter, which plays a key role in removal of glucose from circulation. Response to insulin is regulated by its intracellular localization: in the absence of insulin, it is efficiently retained intracellularly within storage compartments in muscle and fat cells. Upon insulin stimulation, translocates from these compartments to the cell surface where it transports glucose from the extracellular milieu into the cell. This chain is Solute carrier family 2, facilitated glucose transporter member 4, found in Bos taurus (Bovine).